Reading from the N-terminus, the 201-residue chain is NADH-quinone oxidoreductase subunit C (201 aa).

This sequence belongs to the complex I 30 kDa subunit family. NDH-1 is composed of 14 different subunits. Subunits NuoB, C, D, E, F, and G constitute the peripheral sector of the complex.

Its subcellular location is the cell inner membrane. The catalysed reaction is a quinone + NADH + 5 H(+)(in) = a quinol + NAD(+) + 4 H(+)(out). In terms of biological role, NDH-1 shuttles electrons from NADH, via FMN and iron-sulfur (Fe-S) centers, to quinones in the respiratory chain. The immediate electron acceptor for the enzyme in this species is believed to be ubiquinone. Couples the redox reaction to proton translocation (for every two electrons transferred, four hydrogen ions are translocated across the cytoplasmic membrane), and thus conserves the redox energy in a proton gradient. This is NADH-quinone oxidoreductase subunit C from Dechloromonas aromatica (strain RCB).